We begin with the raw amino-acid sequence, 164 residues long: Heat shock protein beta-6 (164 aa).

The tract at residues 1-72 (MEIPVSVQPS…PTAQVSTDPG (72 aa)) is involved in stabilization of the HSPB1:HSBP6 heterodimer. Serine 16 carries the post-translational modification Phosphoserine. The sHSP domain maps to 56–163 (RAPSVALPTA…PLQSPPGAAA (108 aa)). Position 66 is a deamidated glutamine (glutamine 66). The residue at position 157 (serine 157) is a Phosphoserine.

Belongs to the small heat shock protein (HSP20) family. Homodimer. Small heat shock proteins form high molecular mass oligomers containing variable number of monomers; these oligomers display a very flexible quaternary structure easily exchanging their subunits. Heterooligomer with HSPB1; formed through oligomerization of HSPB1:HSBP6 dimers; subunit exchange leads to formation of at least two different heterooligomeric complexes, differing in variable quantities of HSPB1 and HSPB6 homodimers in addition to HSPB1:HSPB6 heterodimers. Heterooligomer with CRYAB; large heterooligomers consist of CRYAB homodimers and HSPB5:HSPB6 heterodimers but lacking HSPB6 homodimers. Interacts with BAG3. Interacts (phosphorylated) with YWHAZ. Interacts with PDE4A and PDE4D; required for maintenance of the non-phosphorylated state of HSPB6 under basal conditions. Interacts with KDR. Interacts with PRKD1. Phosphorylated at Ser-16 by PKA and probably PKD1K; required to protect cardiomyocytes from apoptosis.

It localises to the cytoplasm. The protein resides in the nucleus. The protein localises to the secreted. Functionally, small heat shock protein which functions as a molecular chaperone probably maintaining denatured proteins in a folding-competent state. Seems to have versatile functions in various biological processes. Plays a role in regulating muscle function such as smooth muscle vasorelaxation and cardiac myocyte contractility. May regulate myocardial angiogenesis implicating KDR. Overexpression mediates cardioprotection and angiogenesis after induced damage. Stabilizes monomeric YWHAZ thereby supporting YWHAZ chaperone-like activity. This chain is Heat shock protein beta-6 (HSPB6), found in Bos taurus (Bovine).